The chain runs to 191 residues: Fe/S biogenesis protein NfuA (191 aa).

[4Fe-4S] cluster-binding residues include Cys-149 and Cys-152.

This sequence belongs to the NfuA family. As to quaternary structure, homodimer. [4Fe-4S] cluster is required as a cofactor.

Functionally, involved in iron-sulfur cluster biogenesis. Binds a 4Fe-4S cluster, can transfer this cluster to apoproteins, and thereby intervenes in the maturation of Fe/S proteins. Could also act as a scaffold/chaperone for damaged Fe/S proteins. The chain is Fe/S biogenesis protein NfuA from Yersinia enterocolitica serotype O:8 / biotype 1B (strain NCTC 13174 / 8081).